Here is a 217-residue protein sequence, read N- to C-terminus: MPDCLETGEKLFVHNMNAQCVQKPEEGNGPLGTGGKIVQGKCFRIISTVSPVKLYCCYGVIMVLTVAVIALSVALSTKKTEQIIINKTYAACSKNWTGVGNKCFYFSGYPRNWTFAQAFCMAQEAQLARFDNEEELIFLKRFKGDFDCWIGLHRESSEHPWKWTNNTEYNNMNPILGVGRYAYLSSDRISSSRSYINRMWICSKLNNYNLHCQTPPV.

Residues 1-53 are Cytoplasmic-facing; the sequence is MPDCLETGEKLFVHNMNAQCVQKPEEGNGPLGTGGKIVQGKCFRIISTVSPVK. A helical; Signal-anchor for type II membrane protein transmembrane segment spans residues 54 to 74; the sequence is LYCCYGVIMVLTVAVIALSVA. Topologically, residues 75–217 are extracellular; the sequence is LSTKKTEQII…YNLHCQTPPV (143 aa). C92 and C103 are oxidised to a cystine. The C-type lectin domain maps to 99–203; it reads VGNKCFYFSG…SYINRMWICS (105 aa). N112 carries N-linked (GlcNAc...) asparagine glycosylation. A disulfide bridge links C120 with C202.

As to expression, detected in osteoblasts, growth plate chondrocytes and skeletal muscle overlying the bone (at protein level). Detected in spleen, B-cells, dendritic cells, thymus, and in IL2-activated natural killer cells.

It localises to the cell membrane. Inhibits osteoclast formation. Receptor for KLRB1F. Enhances T-cell activation. Plays a role in splenocyte activation, T-cell responses and IL-2 production. The chain is C-type lectin domain family 2 member I (Clec2i) from Mus musculus (Mouse).